The following is a 295-amino-acid chain: MPWIQIKLNATNDNAEAIGDMLMEETGAVSVTFLDAKDTPVFEPLPGETRLWGDTDVVALYEADMDTSLILQQIKASNMLAEGFAHKVEQVEDKDWEREWMDNFHPMQFGRRLWICPSWREVPDPQAVNVMLDPGLAFGTGTHPTTALCLEWLDNLDLTGKTVIDFGCGSGILAIAAIKLGAAKVIGIDIDPQALLASKDNAARNGVEDQIEVYLPKDQPEGLVADVVVANILAGPLRELSPIIKGLLKPGGQLAMSGILDTQAESVAEFYRDDLELDPIAEKSEWCRISGRKLG.

S-adenosyl-L-methionine contacts are provided by T146, G167, D189, and N231.

The protein belongs to the methyltransferase superfamily. PrmA family.

It localises to the cytoplasm. The catalysed reaction is L-lysyl-[protein] + 3 S-adenosyl-L-methionine = N(6),N(6),N(6)-trimethyl-L-lysyl-[protein] + 3 S-adenosyl-L-homocysteine + 3 H(+). In terms of biological role, methylates ribosomal protein L11. This Vibrio cholerae serotype O1 (strain M66-2) protein is Ribosomal protein L11 methyltransferase.